Here is a 284-residue protein sequence, read N- to C-terminus: Tropomyosin (284 aa).

Position 1 is an N-acetylmethionine (Met-1). Disordered regions lie at residues 1–49 (MDAI…NQKK) and 103–126 (EERL…SERM). A coiled-coil region spans residues 1–284 (MDAIKKKMQA…DQAFSELSGF (284 aa)). Over residues 12 to 45 (KLEKDNAMDKADTLEQQNKEANLRAEKTEEEIRA) the composition is skewed to basic and acidic residues.

This sequence belongs to the tropomyosin family. As to quaternary structure, homodimer. In terms of tissue distribution, expressed in leg muscle and chest protection muscle (at protein level).

Tropomyosin, in association with the troponin complex, plays a central role in the calcium dependent regulation of muscle contraction. This is Tropomyosin from Chionoecetes opilio (Atlantic snow crab).